The following is a 126-amino-acid chain: Small ribosomal subunit protein uS8 (126 aa).

The protein belongs to the universal ribosomal protein uS8 family. In terms of assembly, part of the 30S ribosomal subunit. Contacts proteins S5 and S12.

One of the primary rRNA binding proteins, it binds directly to 16S rRNA central domain where it helps coordinate assembly of the platform of the 30S subunit. This Lawsonia intracellularis (strain PHE/MN1-00) protein is Small ribosomal subunit protein uS8.